The sequence spans 137 residues: Protein FrxA (137 aa).

The sequence is that of Protein FrxA (frxA) from Pyrococcus furiosus (strain ATCC 43587 / DSM 3638 / JCM 8422 / Vc1).